The following is a 99-amino-acid chain: MTMKMKMKMSVVCAVVVVALFLIDVGPVAEAVTCNPTELSSCVPAITGGSKPSSTCCSKLKVQEPCLCNYIKNPSLKQYVNSPGAKKVLSNCGVTYPNC.

The N-terminal stretch at 1-33 (MTMKMKMKMSVVCAVVVVALFLIDVGPVAEAVT) is a signal peptide. 4 cysteine pairs are disulfide-bonded: C34–C68, C42–C56, C57–C92, and C66–C99.

This sequence belongs to the plant LTP family. As to expression, expressed in most tissues except nodules.

In terms of biological role, potential lipid transfer protein. This chain is Probable non-specific lipid-transfer protein AKCS9, found in Vigna unguiculata (Cowpea).